Reading from the N-terminus, the 480-residue chain is Proline--tRNA ligase (480 aa).

It belongs to the class-II aminoacyl-tRNA synthetase family. ProS type 3 subfamily. Homodimer.

It is found in the cytoplasm. The catalysed reaction is tRNA(Pro) + L-proline + ATP = L-prolyl-tRNA(Pro) + AMP + diphosphate. Its function is as follows. Catalyzes the attachment of proline to tRNA(Pro) in a two-step reaction: proline is first activated by ATP to form Pro-AMP and then transferred to the acceptor end of tRNA(Pro). The sequence is that of Proline--tRNA ligase from Roseiflexus sp. (strain RS-1).